Reading from the N-terminus, the 528-residue chain is Phosphoenolpyruvate carboxykinase (ATP) (528 aa).

The substrate site is built by Arg56, Tyr192, and Lys198. ATP contacts are provided by residues Lys198, His217, and 233 to 241 (GLSGTGKTT). Lys198 and His217 together coordinate Mn(2+). Asp254 serves as a coordination point for Mn(2+). The ATP site is built by Glu282, Arg319, and Thr444. Substrate is bound at residue Arg319.

Belongs to the phosphoenolpyruvate carboxykinase (ATP) family. Requires Mn(2+) as cofactor.

It localises to the cytoplasm. The catalysed reaction is oxaloacetate + ATP = phosphoenolpyruvate + ADP + CO2. Its pathway is carbohydrate biosynthesis; gluconeogenesis. Involved in the gluconeogenesis. Catalyzes the conversion of oxaloacetate (OAA) to phosphoenolpyruvate (PEP) through direct phosphoryl transfer between the nucleoside triphosphate and OAA. This Bacillus cereus (strain G9842) protein is Phosphoenolpyruvate carboxykinase (ATP).